The sequence spans 630 residues: ATP-dependent RNA helicase mrh4, mitochondrial (630 aa).

A mitochondrion-targeting transit peptide spans 1–46 (MNRLGGLSLPLRPVCLFCRAQTSLALSPLQGGQAVRSIATGRLRRR). The disordered stretch occupies residues 46–108 (RARMTLSKDV…GETEEKPAMN (63 aa)). Positions 167–174 (DAVPTPIQ) match the Q motif motif. In terms of domain architecture, Helicase ATP-binding spans 195–407 (DDDEPQYEQY…RKLYPDIWRL (213 aa)). Position 208-215 (208-215 (AETGSGKT)) interacts with ATP. Basic and acidic residues predominate over residues 235 to 255 (EMEKKEEERKVREREENKKNQ). The interval 235–265 (EMEKKEEERKVREREENKKNQAFDLEPEIPP) is disordered. Positions 354–357 (DEAD) match the DEAD box motif. One can recognise a Helicase C-terminal domain in the interval 452–630 (GSDEAGSPWS…VREVWFGLDS (179 aa)).

This sequence belongs to the DEAD box helicase family. MRH4 subfamily.

Its subcellular location is the mitochondrion. It carries out the reaction ATP + H2O = ADP + phosphate + H(+). In terms of biological role, ATP-binding RNA helicase involved in mitochondrial RNA metabolism. Required for maintenance of mitochondrial DNA. In Emericella nidulans (strain FGSC A4 / ATCC 38163 / CBS 112.46 / NRRL 194 / M139) (Aspergillus nidulans), this protein is ATP-dependent RNA helicase mrh4, mitochondrial (mrh4).